We begin with the raw amino-acid sequence, 56 residues long: Small ribosomal subunit protein uS14 (56 aa).

It belongs to the universal ribosomal protein uS14 family. In terms of assembly, component of the small ribosomal subunit (SSU). Mature yeast ribosomes consist of a small (40S) and a large (60S) subunit. The 40S small subunit contains 1 molecule of ribosomal RNA (18S rRNA) and at least 33 different proteins. The large 60S subunit contains 3 rRNA molecules (25S, 5.8S and 5S rRNA) and at least 46 different proteins.

It is found in the cytoplasm. Its subcellular location is the nucleus. Its function is as follows. Component of the ribosome, a large ribonucleoprotein complex responsible for the synthesis of proteins in the cell. The small ribosomal subunit (SSU) binds messenger RNAs (mRNAs) and translates the encoded message by selecting cognate aminoacyl-transfer RNA (tRNA) molecules. The large subunit (LSU) contains the ribosomal catalytic site termed the peptidyl transferase center (PTC), which catalyzes the formation of peptide bonds, thereby polymerizing the amino acids delivered by tRNAs into a polypeptide chain. The nascent polypeptides leave the ribosome through a tunnel in the LSU and interact with protein factors that function in enzymatic processing, targeting, and the membrane insertion of nascent chains at the exit of the ribosomal tunnel. This chain is Small ribosomal subunit protein uS14 (rps29), found in Schizosaccharomyces pombe (strain 972 / ATCC 24843) (Fission yeast).